Here is a 271-residue protein sequence, read N- to C-terminus: Urease accessory protein UreD (271 aa).

Belongs to the UreD family. UreD, UreF and UreG form a complex that acts as a GTP-hydrolysis-dependent molecular chaperone, activating the urease apoprotein by helping to assemble the nickel containing metallocenter of UreC. The UreE protein probably delivers the nickel.

It localises to the cytoplasm. Its function is as follows. Required for maturation of urease via the functional incorporation of the urease nickel metallocenter. The chain is Urease accessory protein UreD from Bacillus sp. (strain TB-90).